The chain runs to 448 residues: MAHISFDASRLDKFVQSNELAEMQAMVNAADSQLREGTGAGNDFRGFLDLPVNYDKDEFARIKEAVAKIKSDSEIFVAIGIGGSYLGAKAAIDFLNNTFYNMLPAEQRDFPQVLFAGNSISSSYLSDLVNLIGDRDFSINVISKSGTTTEPSIAFRVLKDKLIKKYGKEEAKGRIYATTDRAKGALKTESDAEGYAEFVVPDDIGGRFSVLTAVGLLPIAVAGGDIDQLMKGAADARLEYTDTDVTKNDAYKYAALRNILYRKGYTTELLENYEPTLQYFSEWWKQLMGESEGKDQKGIYPSSANFSTDLHSLGQYIQEGRRNLMETVVNVEKPNSDIDIPADEQNLDGLGYLEGHTMDFVNKKAYQGVVLAHTDGGVPVMTVNIPDQTAYTLGYMIYFFEMAVSISGYLNGINPFNQPGVEAYKKNMFALLGKPGFEELGKELNERL.

Residue glutamate 290 is the Proton donor of the active site. Active-site residues include histidine 311 and lysine 425.

This sequence belongs to the GPI family.

The protein resides in the cytoplasm. It catalyses the reaction alpha-D-glucose 6-phosphate = beta-D-fructose 6-phosphate. It participates in carbohydrate biosynthesis; gluconeogenesis. The protein operates within carbohydrate degradation; glycolysis; D-glyceraldehyde 3-phosphate and glycerone phosphate from D-glucose: step 2/4. In terms of biological role, catalyzes the reversible isomerization of glucose-6-phosphate to fructose-6-phosphate. This is Glucose-6-phosphate isomerase from Latilactobacillus sakei subsp. sakei (strain 23K) (Lactobacillus sakei subsp. sakei).